The primary structure comprises 335 residues: Holliday junction branch migration complex subunit RuvB (335 aa).

The segment at 4-184 (ADRIISTSAK…FGIVQRLEFY (181 aa)) is large ATPase domain (RuvB-L). Residues isoleucine 23, arginine 24, glycine 65, lysine 68, threonine 69, threonine 70, 131 to 133 (EDY), arginine 174, tyrosine 184, and arginine 221 contribute to the ATP site. Threonine 69 contributes to the Mg(2+) binding site. Residues 185 to 255 (AVEDLTSIVA…SAKAALLMLD (71 aa)) form a small ATPAse domain (RuvB-S) region. The head domain (RuvB-H) stretch occupies residues 258–335 (DAGFDYLDRK…RYFGLEKLTE (78 aa)). DNA contacts are provided by arginine 294, arginine 313, and arginine 318.

Belongs to the RuvB family. Homohexamer. Forms an RuvA(8)-RuvB(12)-Holliday junction (HJ) complex. HJ DNA is sandwiched between 2 RuvA tetramers; dsDNA enters through RuvA and exits via RuvB. An RuvB hexamer assembles on each DNA strand where it exits the tetramer. Each RuvB hexamer is contacted by two RuvA subunits (via domain III) on 2 adjacent RuvB subunits; this complex drives branch migration. In the full resolvosome a probable DNA-RuvA(4)-RuvB(12)-RuvC(2) complex forms which resolves the HJ.

Its subcellular location is the cytoplasm. It carries out the reaction ATP + H2O = ADP + phosphate + H(+). Its function is as follows. The RuvA-RuvB-RuvC complex processes Holliday junction (HJ) DNA during genetic recombination and DNA repair, while the RuvA-RuvB complex plays an important role in the rescue of blocked DNA replication forks via replication fork reversal (RFR). RuvA specifically binds to HJ cruciform DNA, conferring on it an open structure. The RuvB hexamer acts as an ATP-dependent pump, pulling dsDNA into and through the RuvAB complex. RuvB forms 2 homohexamers on either side of HJ DNA bound by 1 or 2 RuvA tetramers; 4 subunits per hexamer contact DNA at a time. Coordinated motions by a converter formed by DNA-disengaged RuvB subunits stimulates ATP hydrolysis and nucleotide exchange. Immobilization of the converter enables RuvB to convert the ATP-contained energy into a lever motion, pulling 2 nucleotides of DNA out of the RuvA tetramer per ATP hydrolyzed, thus driving DNA branch migration. The RuvB motors rotate together with the DNA substrate, which together with the progressing nucleotide cycle form the mechanistic basis for DNA recombination by continuous HJ branch migration. Branch migration allows RuvC to scan DNA until it finds its consensus sequence, where it cleaves and resolves cruciform DNA. The chain is Holliday junction branch migration complex subunit RuvB from Pasteurella multocida (strain Pm70).